A 226-amino-acid chain; its full sequence is 7-cyano-7-deazaguanine synthase (226 aa).

10–20 (FSGGQDSTTLA) provides a ligand contact to ATP. Residues Cys190, Cys205, Cys208, and Cys211 each coordinate Zn(2+).

It belongs to the QueC family. Zn(2+) serves as cofactor.

It catalyses the reaction 7-carboxy-7-deazaguanine + NH4(+) + ATP = 7-cyano-7-deazaguanine + ADP + phosphate + H2O + H(+). The protein operates within purine metabolism; 7-cyano-7-deazaguanine biosynthesis. Its function is as follows. Catalyzes the ATP-dependent conversion of 7-carboxy-7-deazaguanine (CDG) to 7-cyano-7-deazaguanine (preQ(0)). The polypeptide is 7-cyano-7-deazaguanine synthase (Helicobacter pylori (strain ATCC 700392 / 26695) (Campylobacter pylori)).